Here is a 289-residue protein sequence, read N- to C-terminus: MRKLTSFVCGTGAGFAAYYLQRLRDPQAAVHNSWTNSDKPVDPWALWDTNWDCREPRALVRPLRNSQPEEENRYNAELEKAKAKKARHIILVRHGEYLDVGDSDDTHHLTDRGRKQAEFTGKRLSELGIKWDKIVASTMVRAQETSDIILKQIEFEKEKVVNCAFLREGAPIPPQPPVGHWKPEASQFLRDGSRIEAAFRRYFHRAYPDQEKESYTLIVGHGNVIRYFVCRALQFPAEGWLRISINHASITWLTISPSGNVSIKYLGDSGFMPPELLTNRIPRDVKNVV.

Belongs to the phosphoglycerate mutase family. BPG-dependent PGAM subfamily. In terms of assembly, interacts with Pk92B/ASK1.

It localises to the mitochondrion outer membrane. It carries out the reaction O-phospho-L-seryl-[protein] + H2O = L-seryl-[protein] + phosphate. The enzyme catalyses O-phospho-L-threonyl-[protein] + H2O = L-threonyl-[protein] + phosphate. Functionally, displays phosphatase activity for serine/threonine residues, and dephosphorylates and activates Pk92B kinase. Has apparently no phosphoglycerate mutase activity. In Drosophila yakuba (Fruit fly), this protein is Serine/threonine-protein phosphatase Pgam5, mitochondrial.